Consider the following 255-residue polypeptide: Triosephosphate isomerase (255 aa).

Position 9-11 (9-11 (NWK)) interacts with substrate. Catalysis depends on histidine 95, which acts as the Electrophile. Glutamate 167 (proton acceptor) is an active-site residue. Residues glycine 173, serine 212, and 233–234 (GG) contribute to the substrate site.

The protein belongs to the triosephosphate isomerase family. In terms of assembly, homodimer.

The protein localises to the cytoplasm. It carries out the reaction D-glyceraldehyde 3-phosphate = dihydroxyacetone phosphate. The protein operates within carbohydrate biosynthesis; gluconeogenesis. It participates in carbohydrate degradation; glycolysis; D-glyceraldehyde 3-phosphate from glycerone phosphate: step 1/1. Functionally, involved in the gluconeogenesis. Catalyzes stereospecifically the conversion of dihydroxyacetone phosphate (DHAP) to D-glyceraldehyde-3-phosphate (G3P). In Salmonella agona (strain SL483), this protein is Triosephosphate isomerase.